The primary structure comprises 400 residues: Phosphoglycerate kinase (400 aa).

Substrate is bound by residues 23–25, Arg38, 61–64, Arg120, and Arg153; these read DLN and HFGR. Residues Lys203, Glu325, and 355 to 358 each bind ATP; that span reads GGDT.

This sequence belongs to the phosphoglycerate kinase family. As to quaternary structure, monomer.

Its subcellular location is the cytoplasm. The catalysed reaction is (2R)-3-phosphoglycerate + ATP = (2R)-3-phospho-glyceroyl phosphate + ADP. It participates in carbohydrate degradation; glycolysis; pyruvate from D-glyceraldehyde 3-phosphate: step 2/5. The sequence is that of Phosphoglycerate kinase from Rhizobium leguminosarum bv. trifolii (strain WSM2304).